The primary structure comprises 56 residues: IFNKAYRKVLGQLSARKYLHSLMHSDGIFTDSYSRYRKQMAVKKYLAAVLGKRYKQ.

The tract at residues 42–50 is important for receptor binding; it reads VKKYLAAVL. Leucine amide is present on Leu50.

Belongs to the glucagon family. As to quaternary structure, interacts with ADCYAP1R1 (via N-terminal extracellular domain).

It localises to the secreted. In terms of biological role, PACAP is a neuropeptide involved in diverse array of physiological processes through activating the PACAP subfamily of class B1 G protein-coupled receptors: VIP receptor 1 (VIPR1), VIP receptor 2 (VIPR2), and PACAP type I receptor (ADCYAP1R1). Exerts neuroprotective and general cytoprotective effects due to anti-apoptotic, anti-inflammatory, and antioxidant actions. The polypeptide is Pituitary adenylate cyclase-activating polypeptide (Adcyap1) (Heloderma suspectum (Gila monster)).